The primary structure comprises 245 residues: Extracellular protein ARB_04177 (245 aa).

It is found in the secreted. The sequence is that of Extracellular protein ARB_04177 from Arthroderma benhamiae (strain ATCC MYA-4681 / CBS 112371) (Trichophyton mentagrophytes).